The chain runs to 2325 residues: Protein sidekick homolog (2325 aa).

The first 26 residues, 1–26 (MRNRLLLIFYTTTVLWTIGYTQLVLG), serve as a signal peptide directing secretion. Over 27–2019 (KPPIFQDGGS…IPDDPFYTTW (1993 aa)) the chain is Extracellular. Ig-like C2-type domains are found at residues 28-105 (PPIF…AAIS), 217-319 (PSLQ…AYMT), and 324-397 (PILK…ADLA). 3 cysteine pairs are disulfide-bonded: cysteine 52–cysteine 94, cysteine 247–cysteine 301, and cysteine 345–cysteine 386. An N-linked (GlcNAc...) asparagine glycan is attached at asparagine 407. Ig-like C2-type domains are found at residues 456–544 (PSQK…VQVN) and 547–638 (SLIE…AMLQ). 2 disulfides stabilise this stretch: cysteine 480-cysteine 528 and cysteine 568-cysteine 622. N-linked (GlcNAc...) asparagine glycosylation is found at asparagine 632, asparagine 655, asparagine 807, asparagine 868, asparagine 932, and asparagine 1016. Fibronectin type-III domains are found at residues 645–751 (MPER…MPQQ), 756–853 (APRN…TSEG), 858–957 (APKN…TEED), 961–1055 (SVDE…VPPE), 1059–1154 (RPSM…TLQT), 1159–1254 (PSQR…TYES), 1259–1359 (SPRN…TMED), 1363–1457 (PPES…SSVR), 1463–1566 (APAP…TLPS), 1571–1671 (QPIS…VGYS), 1673–1775 (PKRN…DKPG), 1776–1872 (PVGI…SKDG), and 1873–2004 (PPPP…TEQL). Residues 1036–1059 (TRKGDGPVEETKFESGVPPELPGR) are disordered. Residues 1037-1048 (RKGDGPVEETKF) are compositionally biased toward basic and acidic residues. N-linked (GlcNAc...) asparagine glycosylation is present at asparagine 1107. A disordered region spans residues 1137–1161 (KGRGAPSEPSRSFETLQTNPDTPSQ). Positions 1145-1161 (PSRSFETLQTNPDTPSQ) are enriched in polar residues. Residue asparagine 1614 is glycosylated (N-linked (GlcNAc...) asparagine). 2 disordered regions span residues 1857 to 1884 (GEQR…ITSG) and 1918 to 1947 (PANG…ATST). A glycan (N-linked (GlcNAc...) asparagine) is linked at asparagine 1863. Residues 1935-1947 (AKSAAQTAAATST) are compositionally biased toward low complexity. The helical transmembrane segment at 2020–2040 (WFMALVAMGAFVLIVIIIAIL) threads the bilayer. Residues 2041 to 2325 (CVTGSSAKYR…NLTTGFSSFV (285 aa)) lie on the Cytoplasmic side of the membrane. 4 disordered regions span residues 2080–2113 (NMTR…SVLG), 2164–2187 (TAYV…PTRS), 2202–2226 (RGHI…LQQP), and 2285–2325 (ILTG…SSFV). Polar residues predominate over residues 2091–2100 (PGTTQSWVSD). Over residues 2215 to 2226 (GSQPQGSPLQQP) the composition is skewed to low complexity. Polar residues-rich tracts occupy residues 2294-2305 (AGRSSTTDSTSE) and 2313-2325 (ATPN…SSFV).

The protein belongs to the sidekick family.

It localises to the membrane. Its function is as follows. Cell adhesion protein. This Caenorhabditis elegans protein is Protein sidekick homolog (rig-4).